The sequence spans 363 residues: Phosphoserine aminotransferase (363 aa).

Residue Arg42 participates in L-glutamate binding. Residues 76 to 77 (AS), Trp101, Thr151, Asp170, and Gln193 each bind pyridoxal 5'-phosphate. Lys194 carries the post-translational modification N6-(pyridoxal phosphate)lysine. 234–235 (NT) lines the pyridoxal 5'-phosphate pocket.

This sequence belongs to the class-V pyridoxal-phosphate-dependent aminotransferase family. SerC subfamily. Homodimer. The cofactor is pyridoxal 5'-phosphate.

Its subcellular location is the cytoplasm. It carries out the reaction O-phospho-L-serine + 2-oxoglutarate = 3-phosphooxypyruvate + L-glutamate. The enzyme catalyses 4-(phosphooxy)-L-threonine + 2-oxoglutarate = (R)-3-hydroxy-2-oxo-4-phosphooxybutanoate + L-glutamate. Its pathway is amino-acid biosynthesis; L-serine biosynthesis; L-serine from 3-phospho-D-glycerate: step 2/3. In terms of biological role, catalyzes the reversible conversion of 3-phosphohydroxypyruvate to phosphoserine and of 3-hydroxy-2-oxo-4-phosphonooxybutanoate to phosphohydroxythreonine. The protein is Phosphoserine aminotransferase of Listeria innocua serovar 6a (strain ATCC BAA-680 / CLIP 11262).